A 531-amino-acid polypeptide reads, in one-letter code: Endoglucanase 7 (531 aa).

The signal sequence occupies residues 1–27 (MRGRALVLVAALLLQLLLLAAAGGAGA). Asp89 (nucleophile) is an active-site residue. Residues His430, Asp482, and Glu491 contribute to the active site.

Belongs to the glycosyl hydrolase 9 (cellulase E) family. Ubiquitous.

It localises to the secreted. It catalyses the reaction Endohydrolysis of (1-&gt;4)-beta-D-glucosidic linkages in cellulose, lichenin and cereal beta-D-glucans.. This is Endoglucanase 7 (GLU10) from Oryza sativa subsp. japonica (Rice).